The following is a 559-amino-acid chain: AP-4 complex accessory subunit tepsin (559 aa).

The ENTH domain maps to 2–135; it reads LDRLAFLQQL…FSESIPSPSH (134 aa). Disordered stretches follow at residues 131 to 157, 214 to 290, and 472 to 491; these read PSPSHTVSAKERSQSGMGSQASSAPAL, AIPS…ESLD, and PNGAANQKNPNGSTEKSDPA. 2 stretches are compositionally biased toward low complexity: residues 144–154 and 266–281; these read QSGMGSQASSA and SRSSDVGSKSGSDGQS. Positions 472 to 485 are enriched in polar residues; sequence PNGAANQKNPNGST.

The protein localises to the golgi apparatus. Its subcellular location is the trans-Golgi network membrane. It localises to the cytoplasmic vesicle. It is found in the cytoplasm. The protein resides in the cytosol. May play a role in vesicular trafficking of proteins at the trans-Golgi network. This is AP-4 complex accessory subunit tepsin from Xenopus laevis (African clawed frog).